A 181-amino-acid polypeptide reads, in one-letter code: Oligoribonuclease (181 aa).

The Exonuclease domain occupies 8–171 (LIWVDLEMTG…DDIRESIAEL (164 aa)). Residue tyrosine 129 is part of the active site.

This sequence belongs to the oligoribonuclease family.

It localises to the cytoplasm. 3'-to-5' exoribonuclease specific for small oligoribonucleotides. The chain is Oligoribonuclease from Vibrio campbellii (strain ATCC BAA-1116).